The chain runs to 568 residues: Tyrosine-protein kinase transforming protein Src (568 aa).

The disordered stretch occupies residues Met-1 to Pro-58. The N-myristoyl glycine; by host moiety is linked to residue Gly-2. Over residues Lys-7–His-25 the composition is skewed to basic and acidic residues. Residues Gly-81–Ser-142 enclose the SH3 domain. One can recognise an SH2 domain in the interval Trp-148–Cys-245. Residues Leu-267–Phe-520 form the Protein kinase domain. ATP is bound by residues Leu-273–Val-281 and Lys-295. Asp-386 acts as the Proton acceptor in catalysis. Position 416 is a phosphotyrosine; by autocatalysis (Tyr-416).

The protein belongs to the protein kinase superfamily. Tyr protein kinase family. SRC subfamily. Post-translationally, the phosphorylated form is termed pp60v-src.

It carries out the reaction L-tyrosyl-[protein] + ATP = O-phospho-L-tyrosyl-[protein] + ADP + H(+). Functionally, this phosphoprotein, required for both the initiation and the maintenance of neoplastic transformation, is a protein kinase that catalyzes the phosphorylation of tyrosine residues in vitro. The protein is Tyrosine-protein kinase transforming protein Src (V-SRC) of Galliformes.